The chain runs to 73 residues: RNA-binding protein Hfq (73 aa).

The 61-residue stretch at 8–68 (DQFLNQIRKD…ISTFAPQKNV (61 aa)) folds into the Sm domain.

This sequence belongs to the Hfq family. Homohexamer.

Functionally, RNA chaperone that binds small regulatory RNA (sRNAs) and mRNAs to facilitate mRNA translational regulation in response to envelope stress, environmental stress and changes in metabolite concentrations. Also binds with high specificity to tRNAs. This is RNA-binding protein Hfq from Bacillus pumilus (strain SAFR-032).